Here is a 243-residue protein sequence, read N- to C-terminus: 23S rRNA (guanosine-2'-O-)-methyltransferase RlmB (243 aa).

Residues glycine 196, isoleucine 216, and leucine 225 each coordinate S-adenosyl-L-methionine.

It belongs to the class IV-like SAM-binding methyltransferase superfamily. RNA methyltransferase TrmH family. RlmB subfamily. Homodimer.

The protein localises to the cytoplasm. The enzyme catalyses guanosine(2251) in 23S rRNA + S-adenosyl-L-methionine = 2'-O-methylguanosine(2251) in 23S rRNA + S-adenosyl-L-homocysteine + H(+). Specifically methylates the ribose of guanosine 2251 in 23S rRNA. This is 23S rRNA (guanosine-2'-O-)-methyltransferase RlmB from Salmonella typhimurium (strain LT2 / SGSC1412 / ATCC 700720).